The following is a 112-amino-acid chain: Small ribosomal subunit protein bS6 (112 aa).

It belongs to the bacterial ribosomal protein bS6 family.

Functionally, binds together with bS18 to 16S ribosomal RNA. The protein is Small ribosomal subunit protein bS6 of Chlamydia abortus (strain DSM 27085 / S26/3) (Chlamydophila abortus).